Reading from the N-terminus, the 1537-residue chain is DNA excision repair protein ERCC-6-like 2 (1537 aa).

A Helicase ATP-binding domain is found at Y134 to G319. D147 to T154 lines the ATP pocket. Residues D270–H273 carry the DEAH box motif. Positions V510 to K660 constitute a Helicase C-terminal domain. Disordered regions lie at residues K715–T735 and S749–T768. Residues G755–D764 show a composition bias toward basic and acidic residues. Positions P772–S783 match the Atypical PIP-box motif. 3 disordered regions span residues K791 to P811, S833 to D891, and E918 to L948. A compositionally biased stretch (basic and acidic residues) spans E834–L857. S968 and S971 each carry phosphoserine. Residues V1274–D1306 are disordered. A compositionally biased stretch (basic and acidic residues) spans K1276–L1292. Residues N1295 to D1306 are compositionally biased toward polar residues.

Belongs to the SNF2/RAD54 helicase family. In terms of assembly, interacts with NEK6. Interacts (via an atypical PIP-box) with PCNA; this interaction facilitates cenrtomeric localization of ERCC6L2. Interacts with CYREN; this interaction is DNA independent. Interacts with XRCC6 and XRCC5. In terms of processing, phosphorylated by NEK6.

It localises to the nucleus. The protein localises to the cytoplasm. Its subcellular location is the cytoskeleton. The protein resides in the microtubule organizing center. It is found in the centrosome. It localises to the mitochondrion. The protein localises to the chromosome. Its subcellular location is the centromere. In terms of biological role, promotes double-strand break (DSB) end-joining and facilitates programmed recombination by controlling how DNA ends are joined in a spatially oriented manner during repair. Also plays a role in DNA repair by restricting DNA end resection in double strand break (DSB) repair. Facilitates replication of complex DNA regions and regulates the maintenance of chromatin structure. The sequence is that of DNA excision repair protein ERCC-6-like 2 from Mus musculus (Mouse).